The following is a 391-amino-acid chain: F-box only protein 5 (391 aa).

One can recognise an F-box domain in the interval 198–245 (AELFHRDFKHLLTKILRHLSAMDLINVISVSTTWRKILQKDNSAYNSY). A ZBR-type zinc finger spans residues 318–366 (CLKVCVDCSSPAKYDPYLHRATCTRESCKFDFCTLCSCKYHGSKCCQTS). 8 residues coordinate Zn(2+): C322, C325, C340, C345, C350, C353, H358, and C363. A disordered region spans residues 365–391 (TSKPRSYRVPSEPLPGSKKSKQNLRRL). A compositionally biased stretch (basic residues) spans 382-391 (KKSKQNLRRL).

As to quaternary structure, part of a SCF (SKP1-cullin-F-box) protein ligase complex. Interacts with btrc. Interacts with skp1. Interacts with cdc20. Interacts with pin1; stabilizes fbxo5 by preventing its association with btrc in an isomerization-dependent pathway; this interaction is present during G2 phase and prevents fbxo5 degradation. Interacts with plk1. Proteolysed; proteolysis is induced by both cyclin B-cdk1 and cyclin A-cdk1/2 complex through probable phosphorylation. Proteolysis is inhibited by pin1 during G2.

The protein localises to the nucleus. Its subcellular location is the cytoplasm. It localises to the cytoskeleton. It is found in the spindle. The protein resides in the microtubule organizing center. The protein localises to the centrosome. It participates in protein modification; protein ubiquitination. Its function is as follows. Regulates progression through early mitosis by inhibiting the anaphase promoting complex/cyclosome (APC). Binds to the APC activators cdc20 to prevent APC activation. Can also bind directly to the APC to inhibit substrate-binding. Required to arrest unfertilized eggs at metaphase of meiosis II, by preventing their release from metaphase of meiosis II, through inhibition of APC-dependent cyclin B destruction leading to stabilization of cyclin B-cdk1 complex activity. The polypeptide is F-box only protein 5 (Xenopus tropicalis (Western clawed frog)).